We begin with the raw amino-acid sequence, 433 residues long: Xylose isomerase (433 aa).

Mg(2+) is bound by residues aspartate 305 and aspartate 307.

Belongs to the xylose isomerase family. As to quaternary structure, homotetramer. Mg(2+) serves as cofactor.

Its subcellular location is the cytoplasm. It catalyses the reaction alpha-D-xylose = alpha-D-xylulofuranose. This is Xylose isomerase from Cereibacter sphaeroides (strain KD131 / KCTC 12085) (Rhodobacter sphaeroides).